A 208-amino-acid polypeptide reads, in one-letter code: Glycerol-3-phosphate acyltransferase 1 (208 aa).

The next 5 helical transmembrane spans lie at 52–72, 77–97, 112–132, 140–160, and 161–181; these read VVLM…YLLI, WVIL…WLDF, FLLP…LVFI, IALA…YGSH, and SEFA…KFVL.

It belongs to the PlsY family. As to quaternary structure, probably interacts with PlsX.

It localises to the cell membrane. It carries out the reaction an acyl phosphate + sn-glycerol 3-phosphate = a 1-acyl-sn-glycero-3-phosphate + phosphate. Its pathway is lipid metabolism; phospholipid metabolism. Catalyzes the transfer of an acyl group from acyl-phosphate (acyl-PO(4)) to glycerol-3-phosphate (G3P) to form lysophosphatidic acid (LPA). This enzyme utilizes acyl-phosphate as fatty acyl donor, but not acyl-CoA or acyl-ACP. This chain is Glycerol-3-phosphate acyltransferase 1, found in Dehalococcoides mccartyi (strain ATCC BAA-2266 / KCTC 15142 / 195) (Dehalococcoides ethenogenes (strain 195)).